The chain runs to 598 residues: Rho-related protein racA (598 aa).

Residue 11 to 17 (DGAVGKS) coordinates GTP. Positions 32-40 (YVPTVFDNY) match the Effector region motif. GTP-binding positions include 57–61 (DTAGQ) and 115–118 (TKND). A disordered region spans residues 175–210 (ASAKKKGGFFSSSSSSSSSSSSKSSEKSVPIPPVMP). The segment covering 182-197 (GFFSSSSSSSSSSSSK) has biased composition (low complexity). BTB domains are found at residues 239–344 (SDVK…NYLD) and 405–472 (SDIQ…PIEE).

In the N-terminal section; belongs to the small GTPase superfamily. Rho family. As to quaternary structure, interacts with pakB.

This is Rho-related protein racA (racA) from Dictyostelium discoideum (Social amoeba).